We begin with the raw amino-acid sequence, 330 residues long: Short chain dehydrogenase macD (330 aa).

Residues Lys57, Asp86, Asn113, Tyr204, and Lys208 each contribute to the NADP(+) site. Tyr204 acts as the Proton donor in catalysis. The active-site Lowers pKa of active site Tyr is the Lys208.

Belongs to the short-chain dehydrogenases/reductases (SDR) family.

It participates in secondary metabolite biosynthesis; terpenoid biosynthesis. Its function is as follows. Short chain dehydrogenase; part of the gene cluster that mediates the biosynthesis of macrophorins, isoprenoid epoxycyclohexenones containing cyclized drimane moieties. The first step of the pathway is the synthesis of 6-methylsalicylic acid (6-MSA) by the polyketide synthase macA. 6-MSA is then converted to m-cresol by the decarboxylase macB. The cytochrome P450 monooxygenase macC then catalyzes the oxidation of m-cresol to toluquinol. Epoxidation of toluquinol is then performed by the short chain dehydrogenase macD, with the help of macE, and a further prenylation by macG leads to 7-deacetoxyyanuthone A. The next step is the hydroxylation of C-22 of 7-deacetoxyyanuthone A by the cytochrome P450 monooxygenase macH to yield 22-deacetylyanuthone A. O-Mevalon transferase macI then attaches mevalon to the hydroxyl group of 22-deacetylyanuthone A to produce yanuthone E. The terpene cyclase macJ catalyzes the cyclization of 22-deacetylyanuthone A to macrophorin A. MacJ is also able to catalyze cyclization of yanuthone E and 7-deacetoxyyanuthone A to their corresponding macrophorins. The macJ products can be further modified by macH and macJ, as well as by the FAD-dependent monooxygenase macF, to produce additional macrophorins, including 4'-oxomacrophorin A, 4'-oxomacrophorin D and 4'-oxomacrophorin E. The protein is Short chain dehydrogenase macD of Penicillium terrestre.